We begin with the raw amino-acid sequence, 432 residues long: Thiol-specific monooxygenase (432 aa).

Residues G13–G17 and V46–W47 each bind FAD. T65–N66 contributes to the NADP(+) binding site. E117–V118 is a binding site for FAD. S199–D202 contacts NADP(+).

It belongs to the FMO family. As to quaternary structure, monomer. Requires FAD as cofactor.

Functionally, flavin-dependent oxidation of thiol-containing compounds. Probably required for the correct folding of disulfide-bonded proteins. This chain is Thiol-specific monooxygenase (FMO1), found in Saccharomyces cerevisiae (strain ATCC 204508 / S288c) (Baker's yeast).